Reading from the N-terminus, the 487-residue chain is Betaine aldehyde dehydrogenase (487 aa).

K(+)-binding residues include S26 and D93. 150–152 (GAW) provides a ligand contact to NAD(+). The Charge relay system role is filled by K162. Residues 176–179 (KPSE) and 229–232 (SVPT) each bind NAD(+). Residue L244 coordinates K(+). E250 acts as the Proton acceptor in catalysis. Residues G252, C284, and E384 each contribute to the NAD(+) site. C284 acts as the Nucleophile in catalysis. C284 is subject to Cysteine sulfenic acid (-SOH). K(+)-binding residues include K454 and G457. E461 serves as the catalytic Charge relay system.

It belongs to the aldehyde dehydrogenase family. Dimer of dimers. K(+) is required as a cofactor.

The catalysed reaction is betaine aldehyde + NAD(+) + H2O = glycine betaine + NADH + 2 H(+). It functions in the pathway amine and polyamine biosynthesis; betaine biosynthesis via choline pathway; betaine from betaine aldehyde: step 1/1. Functionally, involved in the biosynthesis of the osmoprotectant glycine betaine. Catalyzes the irreversible oxidation of betaine aldehyde to the corresponding acid. This is Betaine aldehyde dehydrogenase from Rhizobium etli (strain ATCC 51251 / DSM 11541 / JCM 21823 / NBRC 15573 / CFN 42).